We begin with the raw amino-acid sequence, 144 residues long: Large ribosomal subunit protein uL16 (144 aa).

Positions 1–17 (MLQPKKTKFRRQQKGRA) are enriched in basic residues. Residues 1–22 (MLQPKKTKFRRQQKGRAKGNAQ) are disordered.

This sequence belongs to the universal ribosomal protein uL16 family. In terms of assembly, part of the 50S ribosomal subunit.

Functionally, binds 23S rRNA and is also seen to make contacts with the A and possibly P site tRNAs. This Bacteroides fragilis (strain ATCC 25285 / DSM 2151 / CCUG 4856 / JCM 11019 / LMG 10263 / NCTC 9343 / Onslow / VPI 2553 / EN-2) protein is Large ribosomal subunit protein uL16.